Consider the following 268-residue polypeptide: Unknown seed protein USP (268 aa).

Positions 1–25 (MEFAHLTVLSLFCLAFVGITATSSG) are cleaved as a signal peptide. Positions 68 to 259 (LFFEHDLHPG…GNKAAAWVPN (192 aa)) constitute a BURP domain.

Expressed in seeds. Detected only in the embryo. In germinating seedlings, detected in roots, root caps, root hairs, vascular bundle, mesophyll cells and epidermal cells of the cotyledons and the hypocotyl.

The protein resides in the golgi apparatus. It is found in the golgi stack. It localises to the prevacuolar compartment. Associated with the protein storage vacuole formation. This Vicia faba (Broad bean) protein is Unknown seed protein USP.